A 344-amino-acid polypeptide reads, in one-letter code: Phenylalanine--tRNA ligase alpha subunit (344 aa).

Glu255 lines the Mg(2+) pocket.

This sequence belongs to the class-II aminoacyl-tRNA synthetase family. Phe-tRNA synthetase alpha subunit type 1 subfamily. Tetramer of two alpha and two beta subunits. It depends on Mg(2+) as a cofactor.

It is found in the cytoplasm. The enzyme catalyses tRNA(Phe) + L-phenylalanine + ATP = L-phenylalanyl-tRNA(Phe) + AMP + diphosphate + H(+). This Phocaeicola vulgatus (strain ATCC 8482 / DSM 1447 / JCM 5826 / CCUG 4940 / NBRC 14291 / NCTC 11154) (Bacteroides vulgatus) protein is Phenylalanine--tRNA ligase alpha subunit.